The primary structure comprises 294 residues: Non-selective voltage-gated ion channel VDAC2 (294 aa).

A2 is modified (N-acetylalanine). K23 and K31 together coordinate ATP. At K31 the chain carries N6-acetyllysine; alternate. K31 carries the post-translational modification N6-succinyllysine; alternate. K31 is covalently cross-linked (Glycyl lysine isopeptide (Lys-Gly) (interchain with G-Cter in ubiquitin); alternate). A run of 2 beta stranded transmembrane segments spans residues 37–46 (LVKLDVKTKS) and 50–58 (VEFSTSGSS). A Glycyl lysine isopeptide (Lys-Gly) (interchain with G-Cter in ubiquitin) cross-link involves residue K64. Residues 65–75 (VTGTLETKYKW) traverse the membrane as a beta stranded segment. Y78 carries the phosphotyrosine modification. The next 3 beta stranded transmembrane spans lie at 80 to 87 (LTFTEKWN), 91 to 100 (TLGTEIAIED), and 106 to 115 (LKLTFDTTFS). Position 118 is a phosphothreonine (T118). K120 carries the post-translational modification N6-acetyllysine; alternate. Residue K120 forms a Glycyl lysine isopeptide (Lys-Gly) (interchain with G-Cter in ubiquitin); alternate linkage. K121 participates in a covalent cross-link: Glycyl lysine isopeptide (Lys-Gly) (interchain with G-Cter in ubiquitin). The next 4 beta stranded transmembrane spans lie at 122–131 (SGKIKSSYKR), 134–141 (VNLGCDVD), 148–156 (AIHGSAVFG), and 161–169 (LAGYQMTFD). A Glycyl lysine isopeptide (Lys-Gly) (interchain with G-Cter in ubiquitin) cross-link involves residue K172. Beta stranded transmembrane passes span 174-186 (KLTR…GYRT), 189-196 (FQLHTNVN), 200-209 (EFGGSIYQKV), 213-222 (LDTSVNLAWT), 229-238 (RFGIAAKYQL), and 242-249 (ASISAKVN). Position 251 is a phosphoserine (S251). NAD(+)-binding positions include 253–255 (LIG) and 271–275 (SALVD). The next 2 beta stranded transmembrane spans lie at 253-262 (LIGVGYTQTL) and 265-274 (GVKLTLSALV). K277 carries the post-translational modification N6-acetyllysine; alternate. K277 is covalently cross-linked (Glycyl lysine isopeptide (Lys-Gly) (interchain with G-Cter in ubiquitin); alternate). A beta stranded transmembrane segment spans residues 284–293 (HKLGLALELE).

The protein belongs to the eukaryotic mitochondrial porin family. Monomer, homodimer and higher order oligomers; formation of higher order structures is necessary for scramblase activity. Interacts with ARMC12 in a TBC1D21-dependent manner. Interacts with KLC3. Interacts with SPATA33. Interacts with PPP3CC in a SPATA33-dependent manner. Ubiquitinated by PRKN during mitophagy, leading to its degradation and enhancement of mitophagy. Deubiquitinated by USP30.

Its subcellular location is the mitochondrion outer membrane. The protein resides in the membrane. The enzyme catalyses chloride(in) = chloride(out). It catalyses the reaction K(+)(in) = K(+)(out). The catalysed reaction is a 1,2-diacyl-sn-glycero-3-phospho-L-serine(in) = a 1,2-diacyl-sn-glycero-3-phospho-L-serine(out). It carries out the reaction a 1,2-diacyl-sn-glycero-3-phosphocholine(in) = a 1,2-diacyl-sn-glycero-3-phosphocholine(out). The enzyme catalyses a 1,2-diacyl-sn-glycero-3-phospho-(1D-myo-inositol)(in) = a 1,2-diacyl-sn-glycero-3-phospho-(1D-myo-inositol)(out). Its function is as follows. Non-selective voltage-gated ion channel that mediates the transport of anions and cations through the mitochondrion outer membrane and plasma membrane. The channel adopts an open conformation at zero mV and a closed conformation at both positive and negative potentials. There are two populations of channels; the main that functions in a lower open-state conductance with lower ion selectivity, that switch, in a voltage-dependent manner, from the open to a low-conducting 'closed' state and the other that has a normal ion selectivity in the typical high conductance, 'open' state. Binds various lipids, including the sphingolipid ceramide, the phospholipid phosphatidylcholine, and the sterols cholesterol and oxysterol. Binding of ceramide promotes the mitochondrial outer membrane permeabilization (MOMP) apoptotic pathway. In terms of biological role, catalyzes the scrambling of phospholipids across the outer mitochondrial membrane; the mechanism is unrelated to channel activity and is capable of translocating both anionic and zwitterionic phospholipids. The protein is Non-selective voltage-gated ion channel VDAC2 of Sus scrofa (Pig).